We begin with the raw amino-acid sequence, 185 residues long: Ribosome-recycling factor (185 aa).

The protein belongs to the RRF family.

Its subcellular location is the cytoplasm. In terms of biological role, responsible for the release of ribosomes from messenger RNA at the termination of protein biosynthesis. May increase the efficiency of translation by recycling ribosomes from one round of translation to another. This Erwinia tasmaniensis (strain DSM 17950 / CFBP 7177 / CIP 109463 / NCPPB 4357 / Et1/99) protein is Ribosome-recycling factor.